A 119-amino-acid chain; its full sequence is C-C motif chemokine 24 (119 aa).

The signal sequence occupies residues 1 to 26 (MAGSATIVAGLLLLVACACCIFPIDS). Cystine bridges form between C33-C58 and C34-C74. Residues N54 and N115 are each glycosylated (N-linked (GlcNAc...) asparagine). Residues 96-119 (PSKGAKAVRTKFAVQRRRGNSTEV) are disordered. Basic residues predominate over residues 101 to 119 (KAVRTKFAVQRRRGNSTEV).

Belongs to the intercrine beta (chemokine CC) family. As to expression, highest expression in jejunum and spleen. Lower levels found in liver and lung. No expression detected in kidney, thymus, brain or testis.

Its subcellular location is the secreted. Chemotactic for resting T-lymphocytes, and eosinophils. Has lower chemotactic activity for neutrophils but none for monocytes and activated lymphocytes. Is a strong suppressor of colony formation by a multipotential hematopoietic progenitor cell line. Binds to CCR3. The sequence is that of C-C motif chemokine 24 from Mus musculus (Mouse).